A 299-amino-acid chain; its full sequence is Bifunctional protein FolD 2 (299 aa).

Residues 168 to 170 (GRS), Ser-193, and Ile-234 each bind NADP(+).

Belongs to the tetrahydrofolate dehydrogenase/cyclohydrolase family. As to quaternary structure, homodimer.

It catalyses the reaction (6R)-5,10-methylene-5,6,7,8-tetrahydrofolate + NADP(+) = (6R)-5,10-methenyltetrahydrofolate + NADPH. The catalysed reaction is (6R)-5,10-methenyltetrahydrofolate + H2O = (6R)-10-formyltetrahydrofolate + H(+). Its pathway is one-carbon metabolism; tetrahydrofolate interconversion. Functionally, catalyzes the oxidation of 5,10-methylenetetrahydrofolate to 5,10-methenyltetrahydrofolate and then the hydrolysis of 5,10-methenyltetrahydrofolate to 10-formyltetrahydrofolate. This is Bifunctional protein FolD 2 from Rhizobium etli (strain ATCC 51251 / DSM 11541 / JCM 21823 / NBRC 15573 / CFN 42).